A 228-amino-acid polypeptide reads, in one-letter code: PKHD-type hydroxylase XC_1340 (228 aa).

Residues 78–180 (RIYPPLFNRY…RVASFFWIQS (103 aa)) form the Fe2OG dioxygenase domain. The Fe cation site is built by His-96, Asp-98, and His-161. Arg-171 is a binding site for 2-oxoglutarate.

Fe(2+) serves as cofactor. The cofactor is L-ascorbate.

The polypeptide is PKHD-type hydroxylase XC_1340 (Xanthomonas campestris pv. campestris (strain 8004)).